Consider the following 494-residue polypeptide: Ubiquinol-cytochrome-c reductase complex core protein I, mitochondrial (494 aa).

A Zn(2+)-binding site is contributed by His-70. Residue Glu-73 is the Proton acceptor of the active site. Zn(2+) contacts are provided by His-74 and Glu-150.

It belongs to the peptidase M16 family. UQCRC1/QCR1 subfamily. In terms of assembly, component of the ubiquinol-cytochrome c oxidoreductase (cytochrome b-c1 complex, complex III, CIII), a multisubunit enzyme composed of 10 subunits. The complex is composed of 3 respiratory subunits cytochrome b, cytochrome c1 and Rieske protein, 2 core protein subunits, and additional low-molecular weight protein subunits. The complex exists as an obligatory dimer and forms supercomplexes (SCs) in the inner mitochondrial membrane with cytochrome c oxidase (complex IV, CIV). It depends on Zn(2+) as a cofactor. The N-terminus is blocked.

It is found in the mitochondrion inner membrane. Component of the ubiquinol-cytochrome c oxidoreductase, a multisubunit transmembrane complex that is part of the mitochondrial electron transport chain which drives oxidative phosphorylation. The respiratory chain contains 3 multisubunit complexes succinate dehydrogenase (complex II, CII), ubiquinol-cytochrome c oxidoreductase (cytochrome b-c1 complex, complex III, CIII) and cytochrome c oxidase (complex IV, CIV), that cooperate to transfer electrons derived from NADH and succinate to molecular oxygen, creating an electrochemical gradient over the inner membrane that drives transmembrane transport and the ATP synthase. The cytochrome b-c1 complex catalyzes electron transfer from ubiquinol to cytochrome c, linking this redox reaction to translocation of protons across the mitochondrial inner membrane, with protons being carried across the membrane as hydrogens on the quinol. In the process called Q cycle, 2 protons are consumed from the matrix, 4 protons are released into the intermembrane space and 2 electrons are passed to cytochrome c. This Euglena gracilis protein is Ubiquinol-cytochrome-c reductase complex core protein I, mitochondrial.